A 90-amino-acid polypeptide reads, in one-letter code: RNA-binding protein Hfq (90 aa).

The Sm domain maps to 9 to 69 (DRFLNHLRVN…ISTIIPSSYV (61 aa)).

The protein belongs to the Hfq family. As to quaternary structure, homohexamer.

Its function is as follows. RNA chaperone that binds small regulatory RNA (sRNAs) and mRNAs to facilitate mRNA translational regulation in response to envelope stress, environmental stress and changes in metabolite concentrations. Also binds with high specificity to tRNAs. This is RNA-binding protein Hfq from Thermotoga petrophila (strain ATCC BAA-488 / DSM 13995 / JCM 10881 / RKU-1).